A 540-amino-acid chain; its full sequence is Phosphatidylinositol 4-phosphate 5-kinase type-1 beta (540 aa).

Positions 1–23 (MSSVTENGDVTAGKPNEEKTYKK) are disordered. The PIPK domain maps to 25 to 395 (TSSAIKGAIQ…RFLKFMNTRV (371 aa)).

The protein localises to the cytoplasm. It is found in the cytosol. The protein resides in the cell membrane. Its subcellular location is the endomembrane system. The enzyme catalyses a 1,2-diacyl-sn-glycero-3-phospho-(1D-myo-inositol 4-phosphate) + ATP = a 1,2-diacyl-sn-glycero-3-phospho-(1D-myo-inositol-4,5-bisphosphate) + ADP + H(+). The catalysed reaction is 1-octadecanoyl-2-(5Z,8Z,11Z,14Z)-eicosatetraenoyl-sn-glycero-3-phospho-1D-myo-inositol 4-phosphate + ATP = 1-octadecanoyl-2-(5Z,8Z,11Z,14Z)-eicosatetraenoyl-sn-glycero-3-phospho-1D-myo-inositol 4,5-bisphosphate + ADP + H(+). It carries out the reaction 1-octadecanoyl-2-(9Z)-octadecenoyl-sn-glycero-3-phospho-1D-myo-inositol 4-phosphate + ATP = 1-octadecanoyl-2-(9Z)-octadecenoyl-sn-glycero-3-phospho-1D-myo-inositol 4,5-bisphosphate + ADP + H(+). It catalyses the reaction 1-octadecanoyl-2-(9Z)-octadecenoyl-sn-glycero-3-phospho-1D-myo-inositol + ATP = 1-octadecanoyl-2-(9Z)-octadecenoyl-sn-glycero-3-phospho-1D-myo-inositol 5-phosphate + ADP + H(+). The enzyme catalyses 1-octadecanoyl-2-(9Z,12Z)-octadecadienoyl-sn-glycero-3-phospho-1D-myo-inositol + ATP = 1-octadecanoyl-2-(9Z,12Z)-octadecadienoyl-sn-glycero-3-phospho-1D-myo-inositol 5-phosphate + ADP + H(+). The catalysed reaction is 1-octadecanoyl-2-(5Z,8Z,11Z,14Z-eicosatetraenoyl)-sn-glycero-3-phospho-(1D-myo-inositol) + ATP = 1-octadecanoyl-2-(5Z,8Z,11Z,14Z)-eicosatetraenoyl-sn-glycero-3-phospho-1D-myo-inositol 5-phosphate + ADP + H(+). It carries out the reaction 1,2-di-(9Z,12Z)-octadecadienoyl-sn-glycero-3-phospho-1D-myo-inositol + ATP = 1,2-di(9Z,12Z)-octadecadienoyl-sn-glycero-3-phospho-1D-myo-inositol 5-phosphate + ADP + H(+). Functionally, catalyzes the phosphorylation of phosphatidylinositol 4-phosphate (PtdIns(4)P/PI4P) to form phosphatidylinositol 4,5-bisphosphate (PtdIns(4,5)P2/PIP2), a lipid second messenger that regulates several cellular processes such as signal transduction, vesicle trafficking, actin cytoskeleton dynamics, cell adhesion, and cell motility. PtdIns(4,5)P2 can directly act as a second messenger or can be utilized as a precursor to generate other second messengers: inositol 1,4,5-trisphosphate (IP3), diacylglycerol (DAG) or phosphatidylinositol-3,4,5-trisphosphate (PtdIns(3,4,5)P3/PIP3). In Gallus gallus (Chicken), this protein is Phosphatidylinositol 4-phosphate 5-kinase type-1 beta (PIP5K1B).